Here is a 943-residue protein sequence, read N- to C-terminus: Isoleucine--tRNA ligase (943 aa).

The 'HIGH' region signature appears at Pro59–His69. Residue Glu577 participates in L-isoleucyl-5'-AMP binding. The 'KMSKS' region motif lies at Lys618–Ser622. Lys621 provides a ligand contact to ATP. Zn(2+) is bound by residues Cys906, Cys909, Cys926, and Cys929.

This sequence belongs to the class-I aminoacyl-tRNA synthetase family. IleS type 1 subfamily. Monomer. Zn(2+) is required as a cofactor.

The protein resides in the cytoplasm. The enzyme catalyses tRNA(Ile) + L-isoleucine + ATP = L-isoleucyl-tRNA(Ile) + AMP + diphosphate. Its function is as follows. Catalyzes the attachment of isoleucine to tRNA(Ile). As IleRS can inadvertently accommodate and process structurally similar amino acids such as valine, to avoid such errors it has two additional distinct tRNA(Ile)-dependent editing activities. One activity is designated as 'pretransfer' editing and involves the hydrolysis of activated Val-AMP. The other activity is designated 'posttransfer' editing and involves deacylation of mischarged Val-tRNA(Ile). This Xylella fastidiosa (strain 9a5c) protein is Isoleucine--tRNA ligase.